The following is a 277-amino-acid chain: Putative phosphoenolpyruvate synthase regulatory protein (277 aa).

156-163 (GVSRAGKT) contacts ADP.

Belongs to the pyruvate, phosphate/water dikinase regulatory protein family. PSRP subfamily.

The catalysed reaction is [pyruvate, water dikinase] + ADP = [pyruvate, water dikinase]-phosphate + AMP + H(+). It catalyses the reaction [pyruvate, water dikinase]-phosphate + phosphate + H(+) = [pyruvate, water dikinase] + diphosphate. Functionally, bifunctional serine/threonine kinase and phosphorylase involved in the regulation of the phosphoenolpyruvate synthase (PEPS) by catalyzing its phosphorylation/dephosphorylation. The protein is Putative phosphoenolpyruvate synthase regulatory protein of Deinococcus radiodurans (strain ATCC 13939 / DSM 20539 / JCM 16871 / CCUG 27074 / LMG 4051 / NBRC 15346 / NCIMB 9279 / VKM B-1422 / R1).